The following is a 374-amino-acid chain: Alanine racemase (374 aa).

K34 functions as the Proton acceptor; specific for D-alanine in the catalytic mechanism. The residue at position 34 (K34) is an N6-(pyridoxal phosphate)lysine. A substrate-binding site is contributed by R138. Y265 acts as the Proton acceptor; specific for L-alanine in catalysis. Residue M313 coordinates substrate.

It belongs to the alanine racemase family. Pyridoxal 5'-phosphate serves as cofactor.

The catalysed reaction is L-alanine = D-alanine. Its pathway is amino-acid biosynthesis; D-alanine biosynthesis; D-alanine from L-alanine: step 1/1. In terms of biological role, catalyzes the interconversion of L-alanine and D-alanine. May also act on other amino acids. The sequence is that of Alanine racemase (alr) from Hahella chejuensis (strain KCTC 2396).